We begin with the raw amino-acid sequence, 215 residues long: MIPATPFLQATALACERDGRMLFENLDLHLHTGDMLQISGPNGCGKTSLLRLLCGLMQPTAGQILLDAQPLGRQPAAPGRKPLWIGHAPAIKDVLTPLENLSWLSALHQPDGADADTIATALDAVGLAGFEDVPCHTLSAGQQRRVALARLYLPGPPLWLLDEPFTALDRQGIEQLEKHLAEHCEHGGMIVMTTHHSLNRLPAGYRDLDLGQWSA.

Residues 8-215 (LQATALACER…RDLDLGQWSA (208 aa)) enclose the ABC transporter domain. 40 to 47 (GPNGCGKT) provides a ligand contact to ATP.

This sequence belongs to the ABC transporter superfamily. CcmA exporter (TC 3.A.1.107) family. In terms of assembly, the complex is composed of two ATP-binding proteins (CcmA) and two transmembrane proteins (CcmB).

It localises to the cell inner membrane. The enzyme catalyses heme b(in) + ATP + H2O = heme b(out) + ADP + phosphate + H(+). Its function is as follows. Part of the ABC transporter complex CcmAB involved in the biogenesis of c-type cytochromes; once thought to export heme, this seems not to be the case, but its exact role is uncertain. Responsible for energy coupling to the transport system. The protein is Cytochrome c biogenesis ATP-binding export protein CcmA of Pseudomonas syringae pv. syringae (strain B728a).